We begin with the raw amino-acid sequence, 173 residues long: MNKAKTLLFTALAFGLSHQALAQDLTVKMTDLQTGKPVGTIELSQNKYGVVFTPELADLTPGMHGFHIHQNGSCASSEKDGKVVLGGAAGGHYDPEHTNKHGFPWTDDNHKGDLPALFVSANGLATNPVLAPRLTLKELKGHAIMIHAGGDNHSDMPKALGGGGARVACGVIQ.

Residues 1–22 (MNKAKTLLFTALAFGLSHQALA) form the signal peptide. Cu cation contacts are provided by histidine 67, histidine 69, and histidine 92. Cysteine 74 and cysteine 169 form a disulfide bridge. The Zn(2+) site is built by histidine 92, histidine 101, histidine 110, and aspartate 113. Histidine 147 serves as a coordination point for Cu cation.

This sequence belongs to the Cu-Zn superoxide dismutase family. As to quaternary structure, homodimer. It depends on Cu cation as a cofactor. Zn(2+) is required as a cofactor.

The protein localises to the periplasm. It carries out the reaction 2 superoxide + 2 H(+) = H2O2 + O2. Its function is as follows. Destroys radicals which are normally produced within the cells and which are toxic to biological systems. In Photobacterium leiognathi, this protein is Superoxide dismutase [Cu-Zn] (sodC).